Here is a 612-residue protein sequence, read N- to C-terminus: GPI mannosyltransferase 3 (612 aa).

The next 2 helical transmembrane spans lie at 92 to 112 (LLAI…AGLM) and 145 to 165 (VIYA…YFTI). The N-linked (GlcNAc...) asparagine glycan is linked to Asn188. A run of 3 helical transmembrane segments spans residues 192 to 212 (IALL…RTFI), 254 to 274 (RPSN…NLLL), and 288 to 308 (ILVV…YFYN). An N-linked (GlcNAc...) asparagine glycan is attached at Asn321. A helical transmembrane segment spans residues 339 to 359 (LLQSLPIMLGYSLPLFIYGLF). Asn361 carries N-linked (GlcNAc...) asparagine glycosylation. 3 consecutive transmembrane segments (helical) span residues 371-391 (FGAL…YSYL), 398-418 (FIYP…LKLA), and 429-449 (EYVW…TTFQ). Residues Asn508, Asn526, and Asn550 are each glycosylated (N-linked (GlcNAc...) asparagine).

It belongs to the glycosyltransferase 22 family. PIGB subfamily.

It localises to the endoplasmic reticulum membrane. The protein operates within glycolipid biosynthesis; glycosylphosphatidylinositol-anchor biosynthesis. Mannosyltransferase involved in glycosylphosphatidylinositol-anchor biosynthesis. Transfers the third mannose to Man2-GlcN-acyl-PI during GPI precursor assembly. The sequence is that of GPI mannosyltransferase 3 (GPI10) from Candida glabrata (strain ATCC 2001 / BCRC 20586 / JCM 3761 / NBRC 0622 / NRRL Y-65 / CBS 138) (Yeast).